Here is a 256-residue protein sequence, read N- to C-terminus: 1-(5-phosphoribosyl)-5-[(5-phosphoribosylamino)methylideneamino] imidazole-4-carboxamide isomerase (256 aa).

The active-site Proton acceptor is the Asp8. The Proton donor role is filled by Asp129.

The protein belongs to the HisA/HisF family.

It localises to the cytoplasm. It catalyses the reaction 1-(5-phospho-beta-D-ribosyl)-5-[(5-phospho-beta-D-ribosylamino)methylideneamino]imidazole-4-carboxamide = 5-[(5-phospho-1-deoxy-D-ribulos-1-ylimino)methylamino]-1-(5-phospho-beta-D-ribosyl)imidazole-4-carboxamide. The protein operates within amino-acid biosynthesis; L-histidine biosynthesis; L-histidine from 5-phospho-alpha-D-ribose 1-diphosphate: step 4/9. The protein is 1-(5-phosphoribosyl)-5-[(5-phosphoribosylamino)methylideneamino] imidazole-4-carboxamide isomerase of Prochlorococcus marinus (strain NATL1A).